The following is a 381-amino-acid chain: DNA dC-&gt;dU-editing enzyme APOBEC-3G (381 aa).

The interval 1–62 (MKPQTRNTVV…ANIFQGQVSF (62 aa)) is essential for cytoplasmic localization. CMP/dCMP-type deaminase domains follow at residues 29–143 (HRNT…SQTG) and 211–325 (GQHQ…LRRL). T32 is subject to Phosphothreonine; by PKA. Positions 67, 98, and 101 each coordinate Zn(2+). Residues 206-333 (DPSVLGQHQS…RLDRAGTPIS (128 aa)) form a necessary for homooligomerization region. Residues 210–212 (LGQ) are interaction with DNA. H254 provides a ligand contact to Zn(2+). E256 serves as the catalytic Proton donor. 2 residues coordinate Zn(2+): C285 and C288. The segment at 310–317 (RIYDYQRG) is interaction with DNA.

Belongs to the cytidine and deoxycytidylate deaminase family. As to quaternary structure, homodimer. Homooligomer. Can bind RNA to form ribonucleoprotein complexes of high-molecular-mass (HMM) or low-molecular-mass (LMM). HMM is inactive and heterogeneous in protein composition because of binding nonselectively to cellular RNAs, which in turn are associated with variety of cellular proteins. The LMM form which is enzymatically active has few or no RNAs associated. Its ability to form homooligomer is distinct from its ability to assemble into HMM. Interacts with APOBEC3B, APOBEC3F, MOV10, AGO2, EIF4E, EIF4ENIF1, DCP2 and DDX6 in an RNA-dependent manner. Interacts with AGO1, AGO3 and PKA/PRKACA. Zn(2+) is required as a cofactor.

It localises to the cytoplasm. The protein resides in the nucleus. The protein localises to the P-body. It catalyses the reaction a 2'-deoxycytidine in single-stranded DNA + H2O + H(+) = a 2'-deoxyuridine in single-stranded DNA + NH4(+). Its function is as follows. DNA deaminase (cytidine deaminase) which acts as an inhibitor of retrovirus replication and retrotransposon mobility. After the penetration of retroviral nucleocapsids into target cells of infection and the initiation of reverse transcription, it can induce the conversion of cytosine to uracil in the minus-sense single-strand viral DNA, leading to G-to-A hypermutations in the subsequent plus-strand viral DNA. The resultant detrimental levels of mutations in the proviral genome, along with a deamination-independent mechanism that works prior to the proviral integration, together exert efficient antiretroviral effects in infected target cells. Selectively targets single-stranded DNA and does not deaminate double-stranded DNA or single- or double-stranded RNA. This chain is DNA dC-&gt;dU-editing enzyme APOBEC-3G (APOBEC3G), found in Lagothrix lagotricha (Brown woolly monkey).